Reading from the N-terminus, the 228-residue chain is 7-cyano-7-deazaguanine synthase (228 aa).

10 to 20 (FSGGQDSTTLA) provides a ligand contact to ATP. Residues Cys-190, Cys-205, Cys-208, and Cys-211 each contribute to the Zn(2+) site.

This sequence belongs to the QueC family. Requires Zn(2+) as cofactor.

It carries out the reaction 7-carboxy-7-deazaguanine + NH4(+) + ATP = 7-cyano-7-deazaguanine + ADP + phosphate + H2O + H(+). It participates in purine metabolism; 7-cyano-7-deazaguanine biosynthesis. In terms of biological role, catalyzes the ATP-dependent conversion of 7-carboxy-7-deazaguanine (CDG) to 7-cyano-7-deazaguanine (preQ(0)). The chain is 7-cyano-7-deazaguanine synthase from Helicobacter pylori (strain HPAG1).